We begin with the raw amino-acid sequence, 1297 residues long: DNA-directed RNA polymerase subunit beta' (1297 aa).

Zn(2+) is bound by residues C60, C62, C75, and C78. Residues D535, D537, and D539 each coordinate Mg(2+). 4 residues coordinate Zn(2+): C883, C961, C968, and C971.

It belongs to the RNA polymerase beta' chain family. In terms of assembly, the RNAP catalytic core consists of 2 alpha, 1 beta, 1 beta' and 1 omega subunit. When a sigma factor is associated with the core the holoenzyme is formed, which can initiate transcription. Mg(2+) is required as a cofactor. Requires Zn(2+) as cofactor.

It carries out the reaction RNA(n) + a ribonucleoside 5'-triphosphate = RNA(n+1) + diphosphate. DNA-dependent RNA polymerase catalyzes the transcription of DNA into RNA using the four ribonucleoside triphosphates as substrates. This chain is DNA-directed RNA polymerase subunit beta', found in Salinispora tropica (strain ATCC BAA-916 / DSM 44818 / JCM 13857 / NBRC 105044 / CNB-440).